Here is a 235-residue protein sequence, read N- to C-terminus: Thiamine-phosphate synthase (235 aa).

4-amino-2-methyl-5-(diphosphooxymethyl)pyrimidine is bound by residues 50–54 (QLRDK) and Asn91. Residues Asp92 and Asp111 each coordinate Mg(2+). Ser130 contributes to the 4-amino-2-methyl-5-(diphosphooxymethyl)pyrimidine binding site. A 2-[(2R,5Z)-2-carboxy-4-methylthiazol-5(2H)-ylidene]ethyl phosphate-binding site is contributed by 160 to 162 (TPT). A 4-amino-2-methyl-5-(diphosphooxymethyl)pyrimidine-binding site is contributed by Lys163. Gly191 is a 2-[(2R,5Z)-2-carboxy-4-methylthiazol-5(2H)-ylidene]ethyl phosphate binding site.

It belongs to the thiamine-phosphate synthase family. Requires Mg(2+) as cofactor.

It carries out the reaction 2-[(2R,5Z)-2-carboxy-4-methylthiazol-5(2H)-ylidene]ethyl phosphate + 4-amino-2-methyl-5-(diphosphooxymethyl)pyrimidine + 2 H(+) = thiamine phosphate + CO2 + diphosphate. The enzyme catalyses 2-(2-carboxy-4-methylthiazol-5-yl)ethyl phosphate + 4-amino-2-methyl-5-(diphosphooxymethyl)pyrimidine + 2 H(+) = thiamine phosphate + CO2 + diphosphate. The catalysed reaction is 4-methyl-5-(2-phosphooxyethyl)-thiazole + 4-amino-2-methyl-5-(diphosphooxymethyl)pyrimidine + H(+) = thiamine phosphate + diphosphate. The protein operates within cofactor biosynthesis; thiamine diphosphate biosynthesis; thiamine phosphate from 4-amino-2-methyl-5-diphosphomethylpyrimidine and 4-methyl-5-(2-phosphoethyl)-thiazole: step 1/1. In terms of biological role, condenses 4-methyl-5-(beta-hydroxyethyl)thiazole monophosphate (THZ-P) and 2-methyl-4-amino-5-hydroxymethyl pyrimidine pyrophosphate (HMP-PP) to form thiamine monophosphate (TMP). This Mycobacterium leprae (strain TN) protein is Thiamine-phosphate synthase.